The following is a 97-amino-acid chain: Vitelline membrane protein 15a-2 (97 aa).

Residues 1–19 (MNKIIAALVLFTAVIGALA) form the signal peptide. The segment at 20–23 (DYPA) is required for binding to the gut receptor. The interval 26-46 (PPPPKPYHAPPPPPYHAPPHH) is disordered. One can recognise a VM domain in the interval 61–97 (KAPAAKCGANLLVGCAPSVAHVPCVPVHPHPPPPAHY).

The protein belongs to the vitelline membrane protein family. Expressed in the anterior region of the follicle cells.

It is found in the secreted. Has an oostatic activity. Inhibits trypsin biosynthesis in the midgut epithelial cells which indirectly reduces the vitellogenin concentration in the hemolymph resulting in inhibition of oocyte development. This is Vitelline membrane protein 15a-2 (15a-2) from Aedes aegypti (Yellowfever mosquito).